The primary structure comprises 614 residues: Putative amino acid transporter AAT1 (614 aa).

A run of 11 helical transmembrane segments spans residues Val184–Leu216, Tyr222–Leu243, Leu255–Val275, Arg295–Phe311, Ile318–Ser340, His360–Phe380, Ile401–Leu417, Ser437–Ala459, Cys531–Val547, Phe553–Tyr575, and Arg587–Ile613.

This sequence belongs to the amino acid/polyamine transporter 2 family.

The protein resides in the vacuole membrane. Its function is as follows. Putative amino acid transporter. Involved in maintaining the osmotic homeostasis of the digestive vacuole. Important for the timely development and growth of the asexual-stage parasites and male gametocyte maturation. This Plasmodium berghei (strain Anka) protein is Putative amino acid transporter AAT1.